The sequence spans 260 residues: Resolvase (260 aa).

A Tyr recombinase domain is found at 38 to 241; the sequence is ELPKYLLAPE…FALDVAARHR (204 aa). Active-site residues include R73, K105, H193, R196, and H219. The active-site O-(3'-phospho-DNA)-tyrosine intermediate is the Y228.

It belongs to the 'phage' integrase family.

Functionally, this resolvase acts at the RfsF equivalent resolution sequence of pColBM-CL139. This Escherichia coli protein is Resolvase (resD).